Consider the following 246-residue polypeptide: Anamorsin homolog (246 aa).

Residues 1–124 (MRVVVVDLDG…ARGTAFSLKS (124 aa)) form an N-terminal SAM-like domain region. The interval 125-158 (RAVRVVTADAGWGADADVDDELIDESALLTELDV) is linker. Residues cysteine 168, cysteine 177, cysteine 180, and cysteine 182 each coordinate [2Fe-2S] cluster. The segment at 168-182 (CDVGAGKKACKNCTC) is fe-S binding site A. 4 residues coordinate [4Fe-4S] cluster: cysteine 206, cysteine 209, cysteine 217, and cysteine 220. 2 short sequence motifs (cx2C motif) span residues 206 to 209 (CGNC) and 217 to 220 (CAGC). The fe-S binding site B stretch occupies residues 206-220 (CGNCALGDAFRCAGC).

The protein belongs to the anamorsin family. As to quaternary structure, monomer. It depends on [2Fe-2S] cluster as a cofactor. Requires [4Fe-4S] cluster as cofactor.

It is found in the cytoplasm. The protein resides in the mitochondrion intermembrane space. In terms of biological role, component of the cytosolic iron-sulfur (Fe-S) protein assembly (CIA) machinery. Required for the maturation of extramitochondrial Fe-S proteins. Part of an electron transfer chain functioning in an early step of cytosolic Fe-S biogenesis, facilitating the de novo assembly of a [4Fe-4S] cluster on the cytosolic Fe-S scaffold complex. Electrons are transferred from NADPH via a FAD- and FMN-containing diflavin oxidoreductase. Together with the diflavin oxidoreductase, also required for the assembly of the diferric tyrosyl radical cofactor of ribonucleotide reductase (RNR), probably by providing electrons for reduction during radical cofactor maturation in the catalytic small subunit. The protein is Anamorsin homolog of Ostreococcus tauri.